The primary structure comprises 621 residues: E3 SUMO-protein ligase PIAS2 (621 aa).

The region spanning 11-45 is the SAP domain; it reads VSSFRVSELQVLLGFAGRNKSGRKHDLLMRALHLL. The LXXLL motif signature appears at 19–23; it reads LQVLL. Residues Lys46 and Lys249 each participate in a glycyl lysine isopeptide (Lys-Gly) (interchain with G-Cter in SUMO2) cross-link. The 166-residue stretch at 134 to 299 folds into the PINIT domain; that stretch reads QPSPPIPPVH…SMSVYLVRQL (166 aa). Residues 331–412 form an SP-RING-type zinc finger; the sequence is PDSEIATTSL…FMEILNDCSD (82 aa). Zn(2+)-binding residues include Cys362, His364, Cys385, and Cys388. Glycyl lysine isopeptide (Lys-Gly) (interchain with G-Cter in SUMO2) cross-links involve residues Lys430, Lys435, Lys443, and Lys452. The SUMO1-binding stretch occupies residues 467–473; sequence IDVIDLT. Residues Ser476, Ser477, and Ser478 each carry the phosphoserine modification. The short motif at 484 to 492 is the Nuclear localization signal element; it reads PPAKRKCIF. Lys489 is covalently cross-linked (Glycyl lysine isopeptide (Lys-Gly) (interchain with G-Cter in SUMO2)). Ser499 carries the phosphoserine modification. Residue Lys502 forms a Glycyl lysine isopeptide (Lys-Gly) (interchain with G-Cter in SUMO2) linkage. A compositionally biased stretch (low complexity) spans 577–610; that stretch reads TASSTSVTTTSPHESSTHVSSSSSRSETGVITSS. The interval 577-621 is disordered; the sequence is TASSTSVTTTSPHESSTHVSSSSSRSETGVITSSGRNIPDIISLD.

It belongs to the PIAS family. As to quaternary structure, binds SUMO1 and UBE2I. Interacts with AXIN1, JUN, MDM2, PARK7, TP53 and TP73 isoform alpha, but not TP73 isoform beta. Interacts with STAT4 following IL12 and IFN-alpha stimulation of T-cells. Interacts also with GTF2I, GTF2IRD1, IKFZ1, DAB2 and MSX2, as well as with several steroid receptors, including ESR1, ESR2, NR3C1, PGR, AR, and with NCOA2. Sumoylation of a target protein seems to enhance the interaction. Binds to sumoylated ELK1. Interacts with PLAG1. Binds DNA, such as CDKN1A promoter, in a sequence-specific manner. Interacts with KLF8; the interaction results in SUMO ligation and repression of KLF8 transcriptional activity and of its cell cycle progression into G(1) phase. Interacts with IFIH1/MDA5. Interacts with PML. Interacts with PRDM1. Sumoylated.

The protein resides in the nucleus speckle. Its subcellular location is the nucleus. It is found in the PML body. It catalyses the reaction S-ubiquitinyl-[E2 ubiquitin-conjugating enzyme]-L-cysteine + [acceptor protein]-L-lysine = [E2 ubiquitin-conjugating enzyme]-L-cysteine + N(6)-ubiquitinyl-[acceptor protein]-L-lysine.. It functions in the pathway protein modification; protein sumoylation. In terms of biological role, functions as an E3-type small ubiquitin-like modifier (SUMO) ligase, stabilizing the interaction between UBE2I and the substrate, and as a SUMO-tethering factor. Plays a crucial role as a transcriptional coregulation in various cellular pathways, including the STAT pathway, the p53 pathway and the steroid hormone signaling pathway. The effects of this transcriptional coregulation, transactivation or silencing may vary depending upon the biological context and PIAS2 isoform studied. However, it seems to be mostly involved in gene silencing. Binds to sumoylated ELK1 and enhances its transcriptional activity by preventing recruitment of HDAC2 by ELK1, thus reversing SUMO-mediated repression of ELK1 transactivation activity. Isoform PIASx-beta, but not isoform PIASx-alpha, promotes MDM2 sumoylation. Isoform PIASx-alpha promotes PARK7 sumoylation. Isoform PIASx-beta promotes NCOA2 sumoylation more efficiently than isoform PIASx-alpha. Sumoylates PML at'Lys-65' and 'Lys-160'. In Mus musculus (Mouse), this protein is E3 SUMO-protein ligase PIAS2 (Pias2).